A 210-amino-acid polypeptide reads, in one-letter code: Probable GTP-binding protein EngB (210 aa).

The EngB-type G domain occupies 25-199 (TGIEVAFAGR…RQKLDTWFSE (175 aa)). Residues 33 to 40 (GRSNAGKS), 60 to 64 (GRTQL), 78 to 81 (DLPG), 145 to 148 (TKAD), and 178 to 180 (FSS) contribute to the GTP site. Ser-40 and Thr-62 together coordinate Mg(2+).

The protein belongs to the TRAFAC class TrmE-Era-EngA-EngB-Septin-like GTPase superfamily. EngB GTPase family. Mg(2+) is required as a cofactor.

Functionally, necessary for normal cell division and for the maintenance of normal septation. In Escherichia coli O6:H1 (strain CFT073 / ATCC 700928 / UPEC), this protein is Probable GTP-binding protein EngB.